The sequence spans 224 residues: 7-cyano-7-deazaguanine synthase (224 aa).

7 to 17 (LSGGLDSSTIL) is a binding site for ATP. Residues cysteine 191, cysteine 199, cysteine 202, and cysteine 205 each contribute to the Zn(2+) site.

The protein belongs to the QueC family. Zn(2+) serves as cofactor.

The catalysed reaction is 7-carboxy-7-deazaguanine + NH4(+) + ATP = 7-cyano-7-deazaguanine + ADP + phosphate + H2O + H(+). The protein operates within purine metabolism; 7-cyano-7-deazaguanine biosynthesis. Catalyzes the ATP-dependent conversion of 7-carboxy-7-deazaguanine (CDG) to 7-cyano-7-deazaguanine (preQ(0)). This is 7-cyano-7-deazaguanine synthase from Nostoc punctiforme (strain ATCC 29133 / PCC 73102).